The sequence spans 226 residues: Uridylate kinase (226 aa).

9-13 (KVSGK) is a binding site for ATP. A UMP-binding site is contributed by glycine 46. ATP contacts are provided by glycine 47 and arginine 51. UMP contacts are provided by residues aspartate 68 and 116 to 122 (FQPGQST). ATP is bound by residues threonine 142, tyrosine 148, and aspartate 151.

Belongs to the UMP kinase family. Homohexamer.

The protein resides in the cytoplasm. It catalyses the reaction UMP + ATP = UDP + ADP. It participates in pyrimidine metabolism; CTP biosynthesis via de novo pathway; UDP from UMP (UMPK route): step 1/1. With respect to regulation, inhibited by UTP. Catalyzes the reversible phosphorylation of UMP to UDP. In Hyperthermus butylicus (strain DSM 5456 / JCM 9403 / PLM1-5), this protein is Uridylate kinase.